A 448-amino-acid chain; its full sequence is Protein odr-4 homolog (448 aa).

Helical transmembrane passes span 76–96 and 428–448; these read ASQL…FLMT and GLLI…YYII.

This sequence belongs to the ODR-4 family.

The protein resides in the membrane. Its function is as follows. May play a role in the trafficking of a subset of G-protein coupled receptors. This chain is Protein odr-4 homolog (odr4), found in Xenopus tropicalis (Western clawed frog).